Consider the following 276-residue polypeptide: Undecaprenyl-diphosphatase (276 aa).

7 consecutive transmembrane segments (helical) span residues 48–68, 92–112, 119–139, 155–175, 196–216, 225–245, and 255–275; these read AANS…AIVF, LSIA…FLFE, LFSV…MLFA, ISYK…WPGF, ADFT…LSLV, DLMP…LFVV, and IKLV…LLIM.

Belongs to the UppP family.

It is found in the cell membrane. It catalyses the reaction di-trans,octa-cis-undecaprenyl diphosphate + H2O = di-trans,octa-cis-undecaprenyl phosphate + phosphate + H(+). Functionally, catalyzes the dephosphorylation of undecaprenyl diphosphate (UPP). Confers resistance to bacitracin. This chain is Undecaprenyl-diphosphatase, found in Bacillus subtilis (strain 168).